Here is a 562-residue protein sequence, read N- to C-terminus: Protein FAM222B (562 aa).

2 stretches are compositionally biased toward low complexity: residues 147–167 (PQAQ…LAHA) and 183–201 (ALSH…HPQQ). 2 disordered regions span residues 147–242 (PQAQ…PPNV) and 537–562 (AHRA…PGYR).

This sequence belongs to the FAM222 family.

The sequence is that of Protein FAM222B (Fam222b) from Mus musculus (Mouse).